Reading from the N-terminus, the 89-residue chain is Small ribosomal subunit protein uS15 (89 aa).

This sequence belongs to the universal ribosomal protein uS15 family. As to quaternary structure, part of the 30S ribosomal subunit. Forms a bridge to the 50S subunit in the 70S ribosome, contacting the 23S rRNA.

In terms of biological role, one of the primary rRNA binding proteins, it binds directly to 16S rRNA where it helps nucleate assembly of the platform of the 30S subunit by binding and bridging several RNA helices of the 16S rRNA. Its function is as follows. Forms an intersubunit bridge (bridge B4) with the 23S rRNA of the 50S subunit in the ribosome. The sequence is that of Small ribosomal subunit protein uS15 from Bifidobacterium longum (strain DJO10A).